The primary structure comprises 84 residues: Exodeoxyribonuclease 7 small subunit (84 aa).

The protein belongs to the XseB family. As to quaternary structure, heterooligomer composed of large and small subunits.

It is found in the cytoplasm. It catalyses the reaction Exonucleolytic cleavage in either 5'- to 3'- or 3'- to 5'-direction to yield nucleoside 5'-phosphates.. Functionally, bidirectionally degrades single-stranded DNA into large acid-insoluble oligonucleotides, which are then degraded further into small acid-soluble oligonucleotides. This is Exodeoxyribonuclease 7 small subunit from Bacillus velezensis (strain DSM 23117 / BGSC 10A6 / LMG 26770 / FZB42) (Bacillus amyloliquefaciens subsp. plantarum).